Consider the following 363-residue polypeptide: UDP-N-acetylglucosamine--N-acetylmuramyl-(pentapeptide) pyrophosphoryl-undecaprenol N-acetylglucosamine transferase (363 aa).

Residues 10-12, asparagine 124, serine 195, and glutamine 295 each bind UDP-N-acetyl-alpha-D-glucosamine; that span reads TGG.

It belongs to the glycosyltransferase 28 family. MurG subfamily.

It localises to the cell membrane. It carries out the reaction di-trans,octa-cis-undecaprenyl diphospho-N-acetyl-alpha-D-muramoyl-L-alanyl-D-glutamyl-meso-2,6-diaminopimeloyl-D-alanyl-D-alanine + UDP-N-acetyl-alpha-D-glucosamine = di-trans,octa-cis-undecaprenyl diphospho-[N-acetyl-alpha-D-glucosaminyl-(1-&gt;4)]-N-acetyl-alpha-D-muramoyl-L-alanyl-D-glutamyl-meso-2,6-diaminopimeloyl-D-alanyl-D-alanine + UDP + H(+). The protein operates within cell wall biogenesis; peptidoglycan biosynthesis. Functionally, cell wall formation. Catalyzes the transfer of a GlcNAc subunit on undecaprenyl-pyrophosphoryl-MurNAc-pentapeptide (lipid intermediate I) to form undecaprenyl-pyrophosphoryl-MurNAc-(pentapeptide)GlcNAc (lipid intermediate II). The polypeptide is UDP-N-acetylglucosamine--N-acetylmuramyl-(pentapeptide) pyrophosphoryl-undecaprenol N-acetylglucosamine transferase (Bacillus subtilis (strain 168)).